Reading from the N-terminus, the 147-residue chain is Hemoglobin subunit beta (147 aa).

Valine 2 is subject to N-acetylvaline. Residues 3–147 form the Globin domain; that stretch reads HLSAEEKGHI…VATALAHKYH (145 aa). Lysine 60 is subject to N6-acetyllysine. Histidine 64 provides a ligand contact to heme b. Position 83 is an N6-acetyllysine (lysine 83). Histidine 93 is a heme b binding site. Cysteine 94 carries the S-nitrosocysteine modification. An N6-acetyllysine modification is found at lysine 145.

It belongs to the globin family. As to quaternary structure, heterotetramer of two alpha chains and two beta chains. Red blood cells.

Its function is as follows. Involved in oxygen transport from the lung to the various peripheral tissues. This Sminthopsis crassicaudata (Fat-tailed dunnart) protein is Hemoglobin subunit beta (HBB).